Reading from the N-terminus, the 438-residue chain is Protein c-ets-1-A (438 aa).

The region spanning alanine 49–serine 134 is the PNT domain. The interval glutamate 128–arginine 240 is activation domain; required for transcription activation. The segment at phenylalanine 301 to alanine 309 is helix HI-1. The segment at alanine 320–threonine 327 is helix HI-2. Positions isoleucine 332–valine 412 form a DNA-binding region, ETS. The segment at leucine 415–leucine 419 is helix H4. The helix H5 stretch occupies residues proline 423 to methionine 429.

This sequence belongs to the ETS family. Binds DNA as a homodimer; homodimerization is required for transcription activation.

Its subcellular location is the nucleus. The protein localises to the cytoplasm. With respect to regulation, autoinhibited by a module composed of four alpha helices (HI-1, HI-2, H4, and H5) that flank the DNA-binding ETS domain, reducing the affinity for DNA. Its function is as follows. Transcription factor. Directly controls the expression of cytokine and chemokine genes in a wide variety of different cellular contexts. The protein is Protein c-ets-1-A (ets1-a) of Xenopus laevis (African clawed frog).